The chain runs to 525 residues: G patch domain-containing protein 3 (525 aa).

Disordered regions lie at residues 54 to 85 (ERGPPQASPEAARAGPDPAAEDPVLAQAPASD) and 246 to 317 (EQEE…QERT). Residues 274-299 (DEPEDEGQQQEEEEESGSEEDDDRGE) are compositionally biased toward acidic residues. Positions 300–317 (EWERHEALHEDVTGQERT) are enriched in basic and acidic residues. In terms of domain architecture, G-patch spans 411–459 (TKGIGRKVMERQGWAEGQGLGSRCSGVPEALDGDGQHPRCKRGLGYHGE).

As to quaternary structure, interacts with mitochondrial MAVS; the interaction is markedly increased upon viral infection.

It is found in the nucleus. Its subcellular location is the cytoplasm. Involved in transcriptional regulation. It is able to activate transcription from CXCR4 promoter and therefore it might control neural crest cell migration involved in ocular and craniofacial development. Is a negative regulator of immune antiviral response, acting via down-regulation of RIG-I-like receptors signaling and inhibition of type I interferon production. The control mechanism involves interaction with mitochondrial MAVS and inhibition of MAVS assembly with downstream proteins implicated in antiviral response, such as TBK1 and TRAF6. In Mus musculus (Mouse), this protein is G patch domain-containing protein 3 (Gpatch3).